A 913-amino-acid chain; its full sequence is Calcium-activated chloride channel regulator 1 (913 aa).

The signal sequence occupies residues Met-1–Ser-21. The metalloprotease domain stretch occupies residues Asp-46–His-199. Position 156 (His-156) interacts with Zn(2+). Glu-157 is an active-site residue. Residues His-160 and Asn-167 each coordinate Zn(2+). Positions Ile-306–Leu-475 constitute a VWFA domain. N-linked (GlcNAc...) asparagine glycans are attached at residues Asn-503, Asn-514, Asn-770, Asn-804, Asn-810, Asn-836, and Asn-885.

The protein belongs to the CLCR family. Post-translationally, glycosylated. In terms of processing, the translation product is autoproteolytically cleaved by the metalloprotease domain in the endoplasmic reticulum into a N-terminal and a C-terminal products that remain physically associated with each other. The cleavage is necessary for calcium-activated chloride channel (CaCC) activation activity. In terms of tissue distribution, expressed in mucin-producing cells in the respiratory and intestinal tracts, cutaneous sweat glands, and renal mucous glands (at protein level). Strong overexpression in the airways of horses with recurrent airway obstruction (at protein level).

Its subcellular location is the secreted. The protein resides in the extracellular space. May be involved in mediating calcium-activated chloride conductance. May play critical roles in goblet cell metaplasia, mucus hypersecretion, cystic fibrosis and AHR. May be involved in the regulation of mucus production and/or secretion by goblet cells. Involved in the regulation of tissue inflammation in the innate immune response. May play a role as a tumor suppressor. Induces MUC5AC. This is Calcium-activated chloride channel regulator 1 (CLCA1) from Equus caballus (Horse).